The following is a 287-amino-acid chain: HTH-type transcriptional regulator MurR (287 aa).

In terms of domain architecture, HTH rpiR-type spans 1 to 77 (MLYLAKMRNA…MALIEEYSVN (77 aa)). Residues 37–56 (SRNLAKQLEVSQSSIVKFAQ) constitute a DNA-binding region (H-T-H motif). The SIS domain occupies 128 to 268 (VINLISKARL…FVGMVQLNDV (141 aa)).

As to quaternary structure, homotetramer.

It functions in the pathway amino-sugar metabolism; N-acetylmuramate degradation [regulation]. Its function is as follows. Represses the expression of the murPQ operon involved in the uptake and degradation of N-acetylmuramic acid (MurNAc). Binds to two adjacent inverted repeats within the operator region. MurNAc 6-phosphate, the substrate of MurQ, is the specific inducer that weakens binding of MurR to the operator. This Citrobacter koseri (strain ATCC BAA-895 / CDC 4225-83 / SGSC4696) protein is HTH-type transcriptional regulator MurR.